The chain runs to 189 residues: Chitin synthase 1 (189 aa).

Belongs to the chitin synthase family. Class I subfamily.

The protein resides in the cell membrane. The enzyme catalyses [(1-&gt;4)-N-acetyl-beta-D-glucosaminyl](n) + UDP-N-acetyl-alpha-D-glucosamine = [(1-&gt;4)-N-acetyl-beta-D-glucosaminyl](n+1) + UDP + H(+). In terms of biological role, polymerizes chitin, a structural polymer of the cell wall and septum, by transferring the sugar moiety of UDP-GlcNAc to the non-reducing end of the growing chitin polymer. The chain is Chitin synthase 1 (chs1) from Botryotinia fuckeliana (Noble rot fungus).